The chain runs to 98 residues: Large ribosomal subunit protein uL23 (98 aa).

The protein belongs to the universal ribosomal protein uL23 family. As to quaternary structure, part of the 50S ribosomal subunit. Contacts protein L29, and trigger factor when it is bound to the ribosome.

In terms of biological role, one of the early assembly proteins it binds 23S rRNA. One of the proteins that surrounds the polypeptide exit tunnel on the outside of the ribosome. Forms the main docking site for trigger factor binding to the ribosome. The chain is Large ribosomal subunit protein uL23 from Methylorubrum extorquens (strain CM4 / NCIMB 13688) (Methylobacterium extorquens).